Reading from the N-terminus, the 582-residue chain is Aspartate--tRNA ligase (582 aa).

Glutamate 174 serves as a coordination point for L-aspartate. Residues 198–201 are aspartate; sequence QITK. Arginine 220 contacts L-aspartate. Residues 220–222 and glutamine 229 contribute to the ATP site; that span reads RDE. Position 443 (histidine 443) interacts with L-aspartate. Residue glutamate 477 coordinates ATP. Position 484 (arginine 484) interacts with L-aspartate. ATP is bound at residue 529 to 532; the sequence is GLDR.

The protein belongs to the class-II aminoacyl-tRNA synthetase family. Type 1 subfamily. Homodimer.

The protein resides in the cytoplasm. The enzyme catalyses tRNA(Asp) + L-aspartate + ATP = L-aspartyl-tRNA(Asp) + AMP + diphosphate. Catalyzes the attachment of L-aspartate to tRNA(Asp) in a two-step reaction: L-aspartate is first activated by ATP to form Asp-AMP and then transferred to the acceptor end of tRNA(Asp). The protein is Aspartate--tRNA ligase of Streptococcus pyogenes serotype M6 (strain ATCC BAA-946 / MGAS10394).